The sequence spans 142 residues: Galactose-6-phosphate isomerase subunit LacA (142 aa).

It belongs to the LacAB/RpiB family. In terms of assembly, heteromultimeric protein consisting of LacA and LacB.

The enzyme catalyses aldehydo-D-galactose 6-phosphate = keto-D-tagatose 6-phosphate. Its pathway is carbohydrate metabolism; D-galactose 6-phosphate degradation; D-tagatose 6-phosphate from D-galactose 6-phosphate: step 1/1. This chain is Galactose-6-phosphate isomerase subunit LacA, found in Clostridium acetobutylicum (strain ATCC 824 / DSM 792 / JCM 1419 / IAM 19013 / LMG 5710 / NBRC 13948 / NRRL B-527 / VKM B-1787 / 2291 / W).